We begin with the raw amino-acid sequence, 953 residues long: Mannosylglycoprotein endo-beta-mannosidase (953 aa).

The Proton donor role is filled by E461. The active-site Nucleophile is E553.

It belongs to the glycosyl hydrolase 2 family. As to quaternary structure, heterotrimer of 31 kDa, 28 kDa and 42 kDa subunits. Post-translationally, the mature enzyme is proteotically cleaved into 3 subunits of 31 kDa, 28 kDa and 42 kDa. As to expression, ubiquitously expressed.

The catalysed reaction is Hydrolysis of the alpha-D-mannosyl-(1-&gt;6)-beta-D-mannosyl-(1-&gt;4)-N-acetyl-beta-D-glucosaminyl-(1-&gt;4)-N-acetyl-beta-D-glucosaminyl sequence of glycoprotein to alpha-D-mannosyl-(1-&gt;6)-D-mannose and N-acetyl-beta-D-glucosaminyl-(1-&gt;4)-N-acetyl-beta-D-glucosaminyl sequences.. Functionally, glycosidase that specifically hydrolyzes the Man-beta-1,4-GlcNAc linkage in the trimannosyl core structure of N-glycans. Does not hydrolyzes pyridylamino derivatives sugar chains containing Man-alpha-1,3-Man-beta or Xylose-beta-1,2-Man-beta. The chain is Mannosylglycoprotein endo-beta-mannosidase (EBM) from Lilium longiflorum (Trumpet lily).